Consider the following 67-residue polypeptide: uncharacterized protein (67 aa).

This is an uncharacterized protein from Measles virus (strain Halle) (MeV).